Consider the following 331-residue polypeptide: Glycerophosphodiester phosphodiesterase 1 (331 aa).

The Cytoplasmic segment spans residues 1 to 3; that stretch reads MWL. The helical transmembrane segment at 4–24 threads the bilayer; the sequence is WEDQGGLLGPFSFVLVLLLVV. At 25–248 the chain is on the lumenal side; it reads TRSPFNACVL…PRYSVFWKQS (224 aa). One can recognise a GP-PDE domain in the interval 65–331; that stretch reads VSAIAHRGGS…SMLEDCAPHF (267 aa). The Mg(2+) site is built by Glu-97 and Asp-99. N-linked (GlcNAc...) asparagine glycosylation occurs at Asn-168. Position 174 (Asp-174) interacts with Mg(2+). The chain crosses the membrane as a helical span at residues 249–269; sequence VFVVLDILLDWSMHNVLWYLC. Over 270–331 the chain is Cytoplasmic; sequence GISAFLMQKD…SMLEDCAPHF (62 aa).

The protein belongs to the glycerophosphoryl diester phosphodiesterase family. Interacts with PRAF2. Interacts with RGS16. The cofactor is Mg(2+). Post-translationally, N-glycosylated. Widely expressed. Highly expressed in the brain and spinal cord, followed by kidney, liver, and testis. In contrast, little or no expression is detected in the heart or spleen.

The protein resides in the cell membrane. The protein localises to the cytoplasmic vesicle membrane. The catalysed reaction is sn-glycero-3-phospho-1D-myo-inositol + H2O = myo-inositol + sn-glycerol 3-phosphate + H(+). The enzyme catalyses 1-O-(1Z-octadecenyl)-sn-glycero-3-phospho-(N-5Z,8Z,11Z,14Z-eicosatetraenoyl)-ethanolamine + H2O = 1-O-(1Z-octadecenyl)-sn-glycero-3-phosphate + N-(5Z,8Z,11Z,14Z-eicosatetraenoyl)-ethanolamine + H(+). It carries out the reaction 1-O-(1Z-octadecenyl)-sn-glycero-3-phospho-(N-9Z-octadecenoyl)-ethanolamine + H2O = 1-O-(1Z-octadecenyl)-sn-glycero-3-phosphate + N-(9Z-octadecenoyl) ethanolamine + H(+). It catalyses the reaction 1-O-(1Z-octadecenyl)-sn-glycero-3-phospho-N-hexadecanoyl-ethanolamine + H2O = 1-O-(1Z-octadecenyl)-sn-glycero-3-phosphate + N-hexadecanoylethanolamine + H(+). The catalysed reaction is N-(4Z,7Z,10Z,13Z,16Z,19Z)-docosahexaenoyl-sn-glycero-3-phosphoethanolamine + H2O = N-(4Z,7Z,10Z,13Z,16Z,19Z)-docosahexaenoyl ethanolamine + sn-glycerol 3-phosphate + H(+). The enzyme catalyses N-eicosanoyl-sn-glycero-3-phosphoethanolamine + H2O = N-eicosanoyl ethanolamine + sn-glycerol 3-phosphate + H(+). It carries out the reaction N-hexadecanoyl-sn-glycero-3-phosphoethanolamine + H2O = N-hexadecanoylethanolamine + sn-glycerol 3-phosphate + H(+). It catalyses the reaction N-(9Z-octadecenoyl)-sn-glycero-3-phosphoethanolamine + H2O = N-(9Z-octadecenoyl) ethanolamine + sn-glycerol 3-phosphate + H(+). The catalysed reaction is N-(5Z,8Z,11Z,14Z-eicosatetraenoyl)-sn-glycero-3-phosphoethanolamine + H2O = N-(5Z,8Z,11Z,14Z-eicosatetraenoyl)-ethanolamine + sn-glycerol 3-phosphate + H(+). With respect to regulation, inhibited by EDTA, calcium chloride, and zinc chloride. Enhanced by magnesium chloride. Glycerophosphodiester phosphodiesterase activity can be modulated by G-protein signaling pathways. Functionally, hydrolyzes the phosphodiester bond of glycerophosphodiesters such as glycerophosphoinositol (GroPIns) and glycerophosphoethanolamine (GroPEth), to yield a glycerol phosphate and an alcohol. Hydrolyzes glycerophospho-N-acylethanolamines to N-acylethanolamines in the brain and participates in bioactive N-acylethanolamine biosynthesis such as anandamide (an endocannabinoid), N-palmitoylethanolamine (an anti-inflammatory), and N-oleoylethanolamine (an anorexic). In addition, has a lysophospholipase D activity by hydrolyzing N-acyl-lysoplasmenylethanolamine (N-acyl-lysoPlsEt) to N-acylethanolamine. However lysophospholipase D activity is lower than glycerophosphodiester phosphodiesterase activity. Has little or no activity towards glycerophosphocholine. The protein is Glycerophosphodiester phosphodiesterase 1 of Mus musculus (Mouse).